The following is a 359-amino-acid chain: Guanine nucleotide-binding protein alpha-4 subunit (359 aa).

A lipid anchor (N-myristoyl glycine) is attached at glycine 2. Residue cysteine 3 is the site of S-palmitoyl cysteine attachment. One can recognise a G-alpha domain in the interval 31–359 (TEVKLLLLGA…RYNLKDCGLF (329 aa)). Residues 34–47 (KLLLLGAGESGKST) are G1 motif. GTP-binding positions include 39–46 (GAGESGKS), 178–184 (LRARVKS), 203–207 (DVGGQ), 272–275 (NKMD), and alanine 331. Serine 46 lines the Mg(2+) pocket. The G2 motif stretch occupies residues 176–184 (DILRARVKS). The interval 199 to 208 (FRMFDVGGQR) is G3 motif. Positions 268–275 (ILFLNKMD) are G4 motif. The interval 329–334 (TCATDT) is G5 motif.

It belongs to the G-alpha family. G(i/o/t/z) subfamily. G proteins are composed of 3 units; alpha, beta and gamma. The alpha chain contains the guanine nucleotide binding site.

In terms of biological role, guanine nucleotide-binding proteins (G proteins) are involved as modulators or transducers in various transmembrane signaling systems. This is Guanine nucleotide-binding protein alpha-4 subunit (gpa-4) from Caenorhabditis briggsae.